Consider the following 66-residue polypeptide: U-limacoditoxin(59)-Dv128 (66 aa).

Positions 1–20 are cleaved as a signal peptide; that stretch reads MRHLLVLLLICLSVIAMAQA. A 3 X 16 AA tandem repeats of [FI]-G-G-G-L-G-G-A-V-G-G-R-R-R-R-D region spans residues 21–66; the sequence is TFGGGLGGAVGGRRRRDIGGGLGGAVGGRRRRDIGGGLGGAVGGKS. 2 consecutive repeat copies span residues 22 to 37 and 38 to 53. G31 is modified (glycine amide). Residues 33-37 constitute a propeptide that is removed on maturation; that stretch reads RRRRD. A Glycine amide modification is found at G47. Positions 49–53 are excised as a propeptide; that stretch reads RRRRD. The 3; half-length repeat unit spans residues 54–64; that stretch reads IGGGLGGAVGG.

This sequence belongs to the limacoditoxin-59 family. As to expression, expressed by the venom secretory cell of the spine. The spine is a cuticular structure containing a single large nucleated venom-secreting cell at its base. It is an independent unit capable of producing, storing and injecting venom. On the back of D.vulnerans caterpillars, spines are grouped together by 50 to 100 to form scoli, of which there are eight in D.vulnerans.

The protein localises to the secreted. Probable toxin. The protein is U-limacoditoxin(59)-Dv128 of Doratifera vulnerans (Mottled cup moth).